Here is a 534-residue protein sequence, read N- to C-terminus: Paired box protein Pax-1 (534 aa).

A DNA-binding region (paired) is located at residues 98-224; the sequence is TYGEVNQLGG…SSISRILRNK (127 aa). The segment at 101 to 157 is PAI subdomain; it reads EVNQLGGVFVNGRPLPNAIRLRIVELAQLGIRPCDISRQLRVSHGCVSKILARYNET. The interval 176-224 is RED subdomain; sequence NVVKHIRDYKQGDPGIFAWEIRDRLLADGVCDKYNVPSVSSISRILRNK. Disordered stretches follow at residues 424–480 and 492–511; these read PSRE…AAAP and EEEA…QAQP.

It localises to the nucleus. In terms of biological role, this protein is a transcriptional activator. It may play a role in the formation of segmented structures of the embryo. May play an important role in the normal development of the vertebral column. The sequence is that of Paired box protein Pax-1 (PAX1) from Homo sapiens (Human).